Here is a 181-residue protein sequence, read N- to C-terminus: Epidermin decarboxylase (181 aa).

Residue histidine 67 is part of the active site.

It belongs to the HFCD (homooligomeric flavin containing Cys decarboxylase) superfamily. Homododecamer. The cofactor is FMN.

Its function is as follows. Catalyzes the removal of two reducing equivalents (oxidative decarboxylation) from the cysteine residue of the C-terminal meso-lanthionine of epidermin to form a --C==C-- double bond. This is Epidermin decarboxylase (epiD) from Staphylococcus epidermidis.